The primary structure comprises 138 residues: Small ribosomal subunit protein uS11c (138 aa).

Positions 1 to 21 are disordered; sequence MAKSISKIGSRKNARIGSRKQ. Residues 9-21 are compositionally biased toward basic residues; the sequence is GSRKNARIGSRKQ.

This sequence belongs to the universal ribosomal protein uS11 family. As to quaternary structure, part of the 30S ribosomal subunit.

Its subcellular location is the plastid. The protein localises to the chloroplast. This chain is Small ribosomal subunit protein uS11c, found in Cicer arietinum (Chickpea).